Consider the following 323-residue polypeptide: Alpha-tubulin N-acetyltransferase 1 (323 aa).

Residues 1–190 (MEFPFDVDAL…NNFVIFEGFF (190 aa)) form the N-acetyltransferase domain. At Lys56 the chain carries N6-acetyllysine; by autocatalysis. 124–137 (FYIHESVQRHGHGR) is a binding site for acetyl-CoA. At Lys146 the chain carries N6-acetyllysine; by autocatalysis. An acetyl-CoA-binding site is contributed by 160-169 (SQKLLKFLNK). The tract at residues 196 to 239 (PPAPSLRATRHSRAAAVDPTPTAPARKLPPKRAEGDIKPYSSSD) is disordered. Residues 209-220 (AAAVDPTPTAPA) are compositionally biased toward low complexity. Over residues 226–239 (KRAEGDIKPYSSSD) the composition is skewed to basic and acidic residues. 2 positions are modified to N6-acetyllysine; by autocatalysis: Lys233 and Lys244. The segment at 252 to 287 (PLNRAPRRATPPAHPPPRSSSLGNSPERGPLRPFVP) is disordered. A phosphoserine mark is found at Ser272 and Ser276. Arg305 bears the Asymmetric dimethylarginine mark. At Ser315 the chain carries Phosphoserine. The residue at position 323 (Arg323) is an Omega-N-methylarginine.

Belongs to the acetyltransferase ATAT1 family. In terms of assembly, component of the BBSome complex. Interacts with AP2 alpha-adaptins, including AP2A2, but not with AP1 gamma-adaptin (AP1G1/AP1G2); this interaction is required for efficient alpha-tubulin acetylation, hence clathrin-coated pits are sites of microtubule acetylation. In terms of processing, autoacetylation strongly increases tubulin acetylation.

The protein localises to the cytoplasm. The protein resides in the membrane. It localises to the clathrin-coated pit. It is found in the cell junction. Its subcellular location is the focal adhesion. The protein localises to the cell projection. The protein resides in the axon. It localises to the cytoskeleton. It is found in the spindle. The enzyme catalyses L-lysyl-[alpha-tubulin] + acetyl-CoA = N(6)-acetyl-L-lysyl-[alpha-tubulin] + CoA + H(+). Its function is as follows. Specifically acetylates 'Lys-40' in alpha-tubulin on the lumenal side of microtubules. Promotes microtubule destabilization and accelerates microtubule dynamics; this activity may be independent of acetylation activity. Acetylates alpha-tubulin with a slow enzymatic rate, due to a catalytic site that is not optimized for acetyl transfer. Enters the microtubule through each end and diffuses quickly throughout the lumen of microtubules. Acetylates only long/old microtubules because of its slow acetylation rate since it does not have time to act on dynamically unstable microtubules before the enzyme is released. Required for normal sperm flagellar function. Promotes directional cell locomotion and chemotaxis, through AP2A2-dependent acetylation of alpha-tubulin at clathrin-coated pits that are concentrated at the leading edge of migrating cells. May facilitate primary cilium assembly. This chain is Alpha-tubulin N-acetyltransferase 1, found in Macaca mulatta (Rhesus macaque).